The chain runs to 185 residues: Dual-action ribosomal maturation protein DarP (185 aa).

Belongs to the DarP family.

Its subcellular location is the cytoplasm. Member of a network of 50S ribosomal subunit biogenesis factors which assembles along the 30S-50S interface, preventing incorrect 23S rRNA structures from forming. Promotes peptidyl transferase center (PTC) maturation. The sequence is that of Dual-action ribosomal maturation protein DarP from Vibrio vulnificus (strain YJ016).